A 275-amino-acid chain; its full sequence is Dermonecrotic toxin SpaSicTox-betaIIA1 (275 aa).

The active site involves His-5. Mg(2+) contacts are provided by Glu-25 and Asp-27. His-41 acts as the Nucleophile in catalysis. Disulfide bonds link Cys-45–Cys-51 and Cys-47–Cys-190. A Mg(2+)-binding site is contributed by Asp-85.

The protein belongs to the arthropod phospholipase D family. Class II subfamily. Mg(2+) serves as cofactor. As to expression, expressed by the venom gland.

It localises to the secreted. It catalyses the reaction an N-(acyl)-sphingosylphosphocholine = an N-(acyl)-sphingosyl-1,3-cyclic phosphate + choline. It carries out the reaction an N-(acyl)-sphingosylphosphoethanolamine = an N-(acyl)-sphingosyl-1,3-cyclic phosphate + ethanolamine. The catalysed reaction is a 1-acyl-sn-glycero-3-phosphocholine = a 1-acyl-sn-glycero-2,3-cyclic phosphate + choline. The enzyme catalyses a 1-acyl-sn-glycero-3-phosphoethanolamine = a 1-acyl-sn-glycero-2,3-cyclic phosphate + ethanolamine. Functionally, dermonecrotic toxins cleave the phosphodiester linkage between the phosphate and headgroup of certain phospholipids (sphingolipid and lysolipid substrates), forming an alcohol (often choline) and a cyclic phosphate. This toxin acts on sphingomyelin (SM). It may also act on ceramide phosphoethanolamine (CPE), lysophosphatidylcholine (LPC) and lysophosphatidylethanolamine (LPE), but not on lysophosphatidylserine (LPS), and lysophosphatidylglycerol (LPG). It acts by transphosphatidylation, releasing exclusively cyclic phosphate products as second products. Induces dermonecrosis, hemolysis, increased vascular permeability, edema, inflammatory response, and platelet aggregation. This chain is Dermonecrotic toxin SpaSicTox-betaIIA1, found in Sicarius patagonicus (Six-eyed sand spider).